Consider the following 197-residue polypeptide: RNA pyrophosphohydrolase (197 aa).

Positions 6–149 constitute a Nudix hydrolase domain; it reads GYRPNVGIVI…KRDVYRRAMK (144 aa). The short motif at 38-59 is the Nudix box element; the sequence is GGINEGETPEQAMFRELFEEVG. The interval 170 to 197 is disordered; sequence ETKKAETGKKQPYYHKYAPQNKKGRKRR.

This sequence belongs to the Nudix hydrolase family. RppH subfamily. It depends on a divalent metal cation as a cofactor.

Its function is as follows. Accelerates the degradation of transcripts by removing pyrophosphate from the 5'-end of triphosphorylated RNA, leading to a more labile monophosphorylated state that can stimulate subsequent ribonuclease cleavage. The polypeptide is RNA pyrophosphohydrolase (Actinobacillus succinogenes (strain ATCC 55618 / DSM 22257 / CCUG 43843 / 130Z)).